Reading from the N-terminus, the 393-residue chain is Formate-dependent phosphoribosylglycinamide formyltransferase (393 aa).

N(1)-(5-phospho-beta-D-ribosyl)glycinamide-binding positions include 22–23 (EL) and glutamate 82. Residues arginine 114, lysine 155, 160–165 (SSGKGQ), 195–198 (EGFV), and glutamate 203 contribute to the ATP site. The region spanning 119-308 (RLAAEELGLP…EFALHARAIL (190 aa)) is the ATP-grasp domain. The Mg(2+) site is built by glutamate 267 and glutamate 279. N(1)-(5-phospho-beta-D-ribosyl)glycinamide contacts are provided by residues aspartate 286, lysine 356, and 363–364 (RR).

The protein belongs to the PurK/PurT family. Homodimer.

The catalysed reaction is N(1)-(5-phospho-beta-D-ribosyl)glycinamide + formate + ATP = N(2)-formyl-N(1)-(5-phospho-beta-D-ribosyl)glycinamide + ADP + phosphate + H(+). It functions in the pathway purine metabolism; IMP biosynthesis via de novo pathway; N(2)-formyl-N(1)-(5-phospho-D-ribosyl)glycinamide from N(1)-(5-phospho-D-ribosyl)glycinamide (formate route): step 1/1. In terms of biological role, involved in the de novo purine biosynthesis. Catalyzes the transfer of formate to 5-phospho-ribosyl-glycinamide (GAR), producing 5-phospho-ribosyl-N-formylglycinamide (FGAR). Formate is provided by PurU via hydrolysis of 10-formyl-tetrahydrofolate. The polypeptide is Formate-dependent phosphoribosylglycinamide formyltransferase (Nitratidesulfovibrio vulgaris (strain DSM 19637 / Miyazaki F) (Desulfovibrio vulgaris)).